We begin with the raw amino-acid sequence, 277 residues long: Phosphatidylglycerol--prolipoprotein diacylglyceryl transferase (277 aa).

4 consecutive transmembrane segments (helical) span residues 22-42, 59-79, 107-127, and 133-153; these read ISIR…YIVV, LFFY…CLFY, GYEG…LWLY, and MNYM…ACFI. Residue Arg-154 participates in a 1,2-diacyl-sn-glycero-3-phospho-(1'-sn-glycerol) binding. 3 helical membrane passes run 186 to 206, 216 to 236, and 251 to 271; these read PAQL…MFLY, GFFF…VEFL, and MGQW…FFYG.

This sequence belongs to the Lgt family.

Its subcellular location is the cell inner membrane. The catalysed reaction is L-cysteinyl-[prolipoprotein] + a 1,2-diacyl-sn-glycero-3-phospho-(1'-sn-glycerol) = an S-1,2-diacyl-sn-glyceryl-L-cysteinyl-[prolipoprotein] + sn-glycerol 1-phosphate + H(+). The protein operates within protein modification; lipoprotein biosynthesis (diacylglyceryl transfer). In terms of biological role, catalyzes the transfer of the diacylglyceryl group from phosphatidylglycerol to the sulfhydryl group of the N-terminal cysteine of a prolipoprotein, the first step in the formation of mature lipoproteins. The sequence is that of Phosphatidylglycerol--prolipoprotein diacylglyceryl transferase from Bacteroides fragilis (strain ATCC 25285 / DSM 2151 / CCUG 4856 / JCM 11019 / LMG 10263 / NCTC 9343 / Onslow / VPI 2553 / EN-2).